The chain runs to 188 residues: Potassium-transporting ATPase KdpC subunit (188 aa).

The helical transmembrane segment at 13 to 33 threads the bilayer; it reads MTAIFWIGCGLAYPLIFTGFA.

It belongs to the KdpC family. In terms of assembly, the system is composed of three essential subunits: KdpA, KdpB and KdpC.

The protein resides in the cell inner membrane. Part of the high-affinity ATP-driven potassium transport (or Kdp) system, which catalyzes the hydrolysis of ATP coupled with the electrogenic transport of potassium into the cytoplasm. This subunit acts as a catalytic chaperone that increases the ATP-binding affinity of the ATP-hydrolyzing subunit KdpB by the formation of a transient KdpB/KdpC/ATP ternary complex. This chain is Potassium-transporting ATPase KdpC subunit, found in Gloeobacter violaceus (strain ATCC 29082 / PCC 7421).